The sequence spans 355 residues: S-adenosylmethionine:tRNA ribosyltransferase-isomerase (355 aa).

Belongs to the QueA family. In terms of assembly, monomer.

The protein localises to the cytoplasm. It catalyses the reaction 7-aminomethyl-7-carbaguanosine(34) in tRNA + S-adenosyl-L-methionine = epoxyqueuosine(34) in tRNA + adenine + L-methionine + 2 H(+). It participates in tRNA modification; tRNA-queuosine biosynthesis. Its function is as follows. Transfers and isomerizes the ribose moiety from AdoMet to the 7-aminomethyl group of 7-deazaguanine (preQ1-tRNA) to give epoxyqueuosine (oQ-tRNA). This chain is S-adenosylmethionine:tRNA ribosyltransferase-isomerase, found in Aeromonas hydrophila subsp. hydrophila (strain ATCC 7966 / DSM 30187 / BCRC 13018 / CCUG 14551 / JCM 1027 / KCTC 2358 / NCIMB 9240 / NCTC 8049).